The chain runs to 201 residues: Proteasome subunit beta type-2 (201 aa).

Methionine 1 bears the N-acetylmethionine mark.

The protein belongs to the peptidase T1B family. The 26S proteasome consists of a 20S proteasome core and two 19S regulatory subunits. The 20S proteasome core is a barrel-shaped complex made of 28 subunits that are arranged in four stacked rings. The two outer rings are each formed by seven alpha subunits, and the two inner rings are formed by seven beta subunits. The proteolytic activity is exerted by three beta-subunits PSMB5, PSMB6 and PSMB7. In terms of tissue distribution, detected in liver (at protein level).

It localises to the cytoplasm. It is found in the nucleus. Non-catalytic component of the 20S core proteasome complex involved in the proteolytic degradation of most intracellular proteins. This complex plays numerous essential roles within the cell by associating with different regulatory particles. Associated with two 19S regulatory particles, forms the 26S proteasome and thus participates in the ATP-dependent degradation of ubiquitinated proteins. The 26S proteasome plays a key role in the maintenance of protein homeostasis by removing misfolded or damaged proteins that could impair cellular functions, and by removing proteins whose functions are no longer required. Associated with the PA200 or PA28, the 20S proteasome mediates ubiquitin-independent protein degradation. This type of proteolysis is required in several pathways including spermatogenesis (20S-PA200 complex) or generation of a subset of MHC class I-presented antigenic peptides (20S-PA28 complex). This Mus musculus (Mouse) protein is Proteasome subunit beta type-2 (Psmb2).